Reading from the N-terminus, the 461-residue chain is Phosphomethylpyrimidine synthase (461 aa).

Substrate-binding positions include N80, M109, Y139, H175, S195 to G197, D236 to R239, and E275. H279 is a binding site for Zn(2+). Y302 contacts substrate. H343 is a Zn(2+) binding site. Residues C423, C426, and C431 each coordinate [4Fe-4S] cluster.

Belongs to the ThiC family. The cofactor is [4Fe-4S] cluster.

The catalysed reaction is 5-amino-1-(5-phospho-beta-D-ribosyl)imidazole + S-adenosyl-L-methionine = 4-amino-2-methyl-5-(phosphooxymethyl)pyrimidine + CO + 5'-deoxyadenosine + formate + L-methionine + 3 H(+). It functions in the pathway cofactor biosynthesis; thiamine diphosphate biosynthesis. Its function is as follows. Catalyzes the synthesis of the hydroxymethylpyrimidine phosphate (HMP-P) moiety of thiamine from aminoimidazole ribotide (AIR) in a radical S-adenosyl-L-methionine (SAM)-dependent reaction. The sequence is that of Phosphomethylpyrimidine synthase from Picosynechococcus sp. (strain ATCC 27264 / PCC 7002 / PR-6) (Agmenellum quadruplicatum).